Consider the following 101-residue polypeptide: CLAVATA3/ESR (CLE)-related protein 18 (101 aa).

The first 25 residues, 1–25 (MHLLKGGVVLIITLILFLITSSIVA), serve as a signal peptide directing secretion. The interval 37–58 (RQIPTGPDPLHNPPQPSPKHHH) is disordered. Proline 40 and proline 43 each carry hydroxyproline. Positions 42–53 (GPDPLHNPPQPS) are enriched in pro residues. The O-linked (Ara...) hydroxyproline glycan is linked to proline 43. Sulfotyrosine is present on tyrosine 76. The residue at position 84 (proline 84) is a Hydroxyproline.

It belongs to the CLV3/ESR signal peptide family. In terms of processing, the tyrosine sulfation is critical for the function of the peptide. Post-translationally, the O-glycosylation (arabinosylation) of the hydroxyproline Pro-43 enhances binding affinity of the CLE18p peptide for its receptor. As to expression, expressed in roots, leaves, siliques and seedlings.

Its subcellular location is the secreted. It localises to the extracellular space. Functionally, root growth factor that regulates the pattern of root growth and lateral root development by modulating the length and the number of cortical cells in the root apical meristem (RAM), and the anticlinal asymmetric cell divisions in lateral root initiation cells. Its function is as follows. Extracellular signal peptide that regulates cell fate. Represses root apical meristem maintenance. Root growth factor that regulates the pattern of root growth and lateral root development. Regulates the transition of protophloem cells from proliferation to differentiation, thus impinging on postembryonic growth capacity of the root meristem; this signaling pathway requires CRN and CLV2. This chain is CLAVATA3/ESR (CLE)-related protein 18, found in Arabidopsis thaliana (Mouse-ear cress).